Reading from the N-terminus, the 288-residue chain is ATP synthase gamma chain (288 aa).

This sequence belongs to the ATPase gamma chain family. F-type ATPases have 2 components, CF(1) - the catalytic core - and CF(0) - the membrane proton channel. CF(1) has five subunits: alpha(3), beta(3), gamma(1), delta(1), epsilon(1). CF(0) has three main subunits: a, b and c.

The protein resides in the cell inner membrane. Functionally, produces ATP from ADP in the presence of a proton gradient across the membrane. The gamma chain is believed to be important in regulating ATPase activity and the flow of protons through the CF(0) complex. This Legionella pneumophila (strain Paris) protein is ATP synthase gamma chain.